Here is a 1230-residue protein sequence, read N- to C-terminus: Soluble starch synthase 3, chloroplastic/amyloplastic (1230 aa).

A chloroplast-targeting transit peptide spans 1–60 (MDVPFPLHRSLSCTSVSNAITHLKIKPILGFVSHGTTSLSVQSSSWRKDGMVTGVSFSIC). Positions 66 to 189 (RRRRKVSTPR…KDAVKLNKSK (124 aa)) are disordered. Positions 124-145 (VEARVETSDDDTKGVVRDHKFL) are enriched in basic and acidic residues. Polar residues predominate over residues 152–170 (NGSTKSISMSPVRVSSQFV). Basic and acidic residues predominate over residues 177 to 189 (GDDKDAVKLNKSK). K794 contacts ADP-alpha-D-glucose.

Belongs to the glycosyltransferase 1 family. Bacterial/plant glycogen synthase subfamily. Tuber, sink and source leaves.

The protein localises to the plastid. It localises to the chloroplast. Its subcellular location is the amyloplast. It catalyses the reaction [(1-&gt;4)-alpha-D-glucosyl](n) + ADP-alpha-D-glucose = [(1-&gt;4)-alpha-D-glucosyl](n+1) + ADP + H(+). It functions in the pathway glycan biosynthesis; starch biosynthesis. Its function is as follows. May account for most of the soluble starch synthase activity in the tubers. Contributes only a tiny percentage of the granule-bound activity, but may also contribute to the deposition of transient starch in chloroplasts of leaves. The chain is Soluble starch synthase 3, chloroplastic/amyloplastic (SS3) from Solanum tuberosum (Potato).